The following is a 451-amino-acid chain: Phosphoglucosamine mutase (451 aa).

Serine 102 serves as the catalytic Phosphoserine intermediate. Serine 102, aspartate 243, aspartate 245, and aspartate 247 together coordinate Mg(2+). The residue at position 102 (serine 102) is a Phosphoserine.

Belongs to the phosphohexose mutase family. Mg(2+) is required as a cofactor. In terms of processing, activated by phosphorylation.

The catalysed reaction is alpha-D-glucosamine 1-phosphate = D-glucosamine 6-phosphate. Its function is as follows. Catalyzes the conversion of glucosamine-6-phosphate to glucosamine-1-phosphate. The polypeptide is Phosphoglucosamine mutase (Sinorhizobium medicae (strain WSM419) (Ensifer medicae)).